The chain runs to 286 residues: Homoserine kinase (286 aa).

Residue 78-88 participates in ATP binding; it reads PVAHGLGSSSS.

The protein belongs to the GHMP kinase family. Homoserine kinase subfamily.

It is found in the cytoplasm. The enzyme catalyses L-homoserine + ATP = O-phospho-L-homoserine + ADP + H(+). The protein operates within amino-acid biosynthesis; L-threonine biosynthesis; L-threonine from L-aspartate: step 4/5. Functionally, catalyzes the ATP-dependent phosphorylation of L-homoserine to L-homoserine phosphate. The sequence is that of Homoserine kinase from Limosilactobacillus fermentum (strain NBRC 3956 / LMG 18251) (Lactobacillus fermentum).